Reading from the N-terminus, the 488-residue chain is UDP-N-acetylmuramoyl-L-alanyl-D-glutamate--2,6-diaminopimelate ligase (488 aa).

Residue serine 29 coordinates UDP-N-acetyl-alpha-D-muramoyl-L-alanyl-D-glutamate. 108–114 (GTSGKTS) provides a ligand contact to ATP. UDP-N-acetyl-alpha-D-muramoyl-L-alanyl-D-glutamate is bound by residues 150 to 151 (TT), serine 177, glutamine 183, and arginine 185. At lysine 217 the chain carries N6-carboxylysine. Residues arginine 381, 405-408 (DNPR), glycine 453, and glutamate 457 each bind meso-2,6-diaminopimelate. The short motif at 405–408 (DNPR) is the Meso-diaminopimelate recognition motif element.

It belongs to the MurCDEF family. MurE subfamily. Mg(2+) serves as cofactor. Carboxylation is probably crucial for Mg(2+) binding and, consequently, for the gamma-phosphate positioning of ATP.

It localises to the cytoplasm. The enzyme catalyses UDP-N-acetyl-alpha-D-muramoyl-L-alanyl-D-glutamate + meso-2,6-diaminopimelate + ATP = UDP-N-acetyl-alpha-D-muramoyl-L-alanyl-gamma-D-glutamyl-meso-2,6-diaminopimelate + ADP + phosphate + H(+). It participates in cell wall biogenesis; peptidoglycan biosynthesis. In terms of biological role, catalyzes the addition of meso-diaminopimelic acid to the nucleotide precursor UDP-N-acetylmuramoyl-L-alanyl-D-glutamate (UMAG) in the biosynthesis of bacterial cell-wall peptidoglycan. This is UDP-N-acetylmuramoyl-L-alanyl-D-glutamate--2,6-diaminopimelate ligase from Brucella melitensis biotype 1 (strain ATCC 23456 / CCUG 17765 / NCTC 10094 / 16M).